A 791-amino-acid chain; its full sequence is Transient receptor potential cation channel subfamily V member 3 (791 aa).

3 disordered regions span residues 1-37 (MNAH…LTPT), 52-71 (PNPT…MDSN), and 76-113 (LSGN…EEQR). Over 1 to 430 (MNAHSKEMAP…TLEPLHTLLH (430 aa)) the chain is Cytoplasmic. Over residues 95–105 (ETPSNPNSPSA) the composition is skewed to polar residues. ANK repeat units lie at residues 117–148 (KRLK…LCRR), 170–198 (TCLM…EEND), 214–243 (EGQT…DVNA), 261–291 (FGET…DITS), 298–330 (NILH…RSGN), 340–362 (DGLT…YILS), and 398–420 (TTDN…HEML). A helical membrane pass occupies residues 431–460 (TKWKKFAKYMFFLSFCFYFFYNITLTLVSY). The Extracellular segment spans residues 461–479 (YRPREDEDLPHPLALTHKM). The helical transmembrane segment at 480–508 (SWLQLLGRMFVLIWATCISVKEGIAIFLL) threads the bilayer. Over 509-519 (RPSDLQSILSD) the chain is Cytoplasmic. The helical transmembrane segment at 520–540 (AWFHFVFFVQAVLVILSVFLY) threads the bilayer. Over 541-545 (LFAYK) the chain is Extracellular. The helical transmembrane segment at 546–566 (EYLACLVLAMALGWANMLYYT) threads the bilayer. Residues 567-569 (RGF) are Cytoplasmic-facing. The helical transmembrane segment at 570–608 (QSMGMYSVMIQKVILHDVLKFLFVYILFLLGFGVALASL) threads the bilayer. Residues 609–620 (IEKCSKDKKDCS) lie on the Extracellular side of the membrane. Positions 621 to 646 (SYGSFSDAVLELFKLTIGLGDLNIQQ) form an intramembrane region, pore-forming. Gly638 is a binding site for Na(+). The Extracellular segment spans residues 647 to 649 (NST). A helical membrane pass occupies residues 650–686 (YPILFLFLLITYVILTFVLLLNMLIALMGETVENVSK). Over 687–791 (ESERIWRLQR…ELDEFPETSV (105 aa)) the chain is Cytoplasmic.

The protein belongs to the transient receptor (TC 1.A.4) family. TrpV subfamily. TRPV3 sub-subfamily. As to quaternary structure, homotetramer. May convert from a homotetramer to a homopentamer to allow pore dilation. Interacts with TRPV1; may form a heteromeric channel with TRPV1. Interacts with SNX11; this interaction promotes TRPV3 trafficking from the cell membrane to lysosome for degradation. As to expression, expressed in keratinocytes and hair follicles.

It is found in the cell membrane. The protein localises to the cytoplasm. The protein resides in the lysosome. It carries out the reaction Ca(2+)(in) = Ca(2+)(out). The catalysed reaction is Mg(2+)(in) = Mg(2+)(out). It catalyses the reaction Na(+)(in) = Na(+)(out). The enzyme catalyses K(+)(in) = K(+)(out). With respect to regulation, activated by cannabinoid that binds to the vanilloid binding pocket. Diphenylboronic anhydride induces pore dilation and enhances cation permeability by promoting the conversion to a homopentamer. Non-selective calcium permeant cation channel. It is activated by innocuous (warm) temperatures and shows an increased response at noxious temperatures greater than 39 degrees Celsius. Activation exhibits an outward rectification. The channel pore can dilate to provide permeability to larger cations. May associate with TRPV1 and may modulate its activity. Is a negative regulator of hair growth and cycling: TRPV3-coupled signaling suppresses keratinocyte proliferation in hair follicles and induces apoptosis and premature hair follicle regression (catagen). The polypeptide is Transient receptor potential cation channel subfamily V member 3 (Trpv3) (Mus musculus (Mouse)).